The primary structure comprises 602 residues: ATP-dependent DNA helicase XPD (602 aa).

Positions 1–247 (MQKSYGVALE…DLIEMIRSAL (247 aa)) constitute a Helicase ATP-binding domain. 11 to 18 (SPTGSGKT) serves as a coordination point for ATP. [4Fe-4S] cluster-binding residues include cysteine 74, cysteine 95, cysteine 110, and cysteine 146. The DEAH box motif lies at 193-196 (DEAH). Residues 421 to 602 (VIEDIILKVK…SAQAREKYGA (182 aa)) enclose the Helicase C-terminal domain. SsDNA is bound by residues tryptophan 531 and arginine 566.

Belongs to the helicase family. RAD3/XPD subfamily. As to quaternary structure, monomer. [4Fe-4S] cluster serves as cofactor.

It carries out the reaction Couples ATP hydrolysis with the unwinding of duplex DNA at the replication fork by translocating in the 5'-3' direction. This creates two antiparallel DNA single strands (ssDNA). The leading ssDNA polymer is the template for DNA polymerase III holoenzyme which synthesizes a continuous strand.. It catalyses the reaction ATP + H2O = ADP + phosphate + H(+). ATP-dependent 5'-3' DNA helicase. Thought to be involved in nucleotide excision repair (NER) of DNA. The sequence is that of ATP-dependent DNA helicase XPD from Thermoplasma acidophilum (strain ATCC 25905 / DSM 1728 / JCM 9062 / NBRC 15155 / AMRC-C165).